The primary structure comprises 379 residues: Homoserine O-succinyltransferase (379 aa).

Residues 51–360 (NAVLICHALS…DAPQGHDAFL (310 aa)) enclose the AB hydrolase-1 domain. Ser-157 serves as the catalytic Nucleophile. Arg-227 lines the substrate pocket. Active-site residues include Asp-323 and His-356. Position 357 (Asp-357) interacts with substrate.

This sequence belongs to the AB hydrolase superfamily. MetX family. In terms of assembly, homodimer.

It localises to the cytoplasm. It carries out the reaction L-homoserine + succinyl-CoA = O-succinyl-L-homoserine + CoA. It participates in amino-acid biosynthesis; L-methionine biosynthesis via de novo pathway; O-succinyl-L-homoserine from L-homoserine: step 1/1. Transfers a succinyl group from succinyl-CoA to L-homoserine, forming succinyl-L-homoserine. This chain is Homoserine O-succinyltransferase, found in Pseudomonas aeruginosa (strain UCBPP-PA14).